A 306-amino-acid polypeptide reads, in one-letter code: Small ribosomal subunit protein uS2 (306 aa).

Positions 229–238 are enriched in basic and acidic residues; the sequence is GEESAAEERP. The segment at 229-306 is disordered; the sequence is GEESAAEERP…VGEGDESEER (78 aa). Positions 261-287 are enriched in acidic residues; it reads QPGEPEAEAFEEAAGEPEDSTEEEAAE.

This sequence belongs to the universal ribosomal protein uS2 family.

The sequence is that of Small ribosomal subunit protein uS2 from Rubrobacter xylanophilus (strain DSM 9941 / JCM 11954 / NBRC 16129 / PRD-1).